Consider the following 321-residue polypeptide: tRNA pseudouridine synthase B (321 aa).

The Nucleophile role is filled by Asp-47.

The protein belongs to the pseudouridine synthase TruB family. Type 1 subfamily.

The catalysed reaction is uridine(55) in tRNA = pseudouridine(55) in tRNA. Its function is as follows. Responsible for synthesis of pseudouridine from uracil-55 in the psi GC loop of transfer RNAs. The protein is tRNA pseudouridine synthase B of Shewanella baltica (strain OS185).